The chain runs to 470 residues: Histidine--tRNA ligase (470 aa).

Positions 69–99 (GIDPILPPNRQAEKDKSGETGKDKSGETGSE) are disordered. Residues 79–94 (QAEKDKSGETGKDKSG) show a composition bias toward basic and acidic residues.

Belongs to the class-II aminoacyl-tRNA synthetase family. As to quaternary structure, homodimer.

The protein localises to the cytoplasm. It catalyses the reaction tRNA(His) + L-histidine + ATP = L-histidyl-tRNA(His) + AMP + diphosphate + H(+). The sequence is that of Histidine--tRNA ligase from Nostoc punctiforme (strain ATCC 29133 / PCC 73102).